The sequence spans 450 residues: Tubulin alpha chain (450 aa).

The MREC motif motif lies at 1 to 4 (MREC). Gln11 provides a ligand contact to GTP. N6-acetyllysine is present on Lys40. Glu71, Ser140, Gly144, Thr145, Thr179, Asn206, and Asn228 together coordinate GTP. Position 71 (Glu71) interacts with Mg(2+). The active site involves Glu254. Glu444 is subject to 5-glutamyl polyglutamate.

Belongs to the tubulin family. Dimer of alpha and beta chains. A typical microtubule is a hollow water-filled tube with an outer diameter of 25 nm and an inner diameter of 15 nM. Alpha-beta heterodimers associate head-to-tail to form protofilaments running lengthwise along the microtubule wall with the beta-tubulin subunit facing the microtubule plus end conferring a structural polarity. Microtubules usually have 13 protofilaments but different protofilament numbers can be found in some organisms and specialized cells. The cofactor is Mg(2+). Post-translationally, some glutamate residues at the C-terminus are polyglycylated, resulting in polyglycine chains on the gamma-carboxyl group. Glycylation is mainly limited to tubulin incorporated into axonemes (cilia and flagella) whereas glutamylation is prevalent in neuronal cells, centrioles, axonemes, and the mitotic spindle. Both modifications can coexist on the same protein on adjacent residues, and lowering polyglycylation levels increases polyglutamylation, and reciprocally. The precise function of polyglycylation is still unclear. Some glutamate residues at the C-terminus are polyglutamylated, resulting in polyglutamate chains on the gamma-carboxyl group. Polyglutamylation plays a key role in microtubule severing by spastin (SPAST). SPAST preferentially recognizes and acts on microtubules decorated with short polyglutamate tails: severing activity by SPAST increases as the number of glutamates per tubulin rises from one to eight, but decreases beyond this glutamylation threshold. In terms of processing, acetylation of alpha chains at Lys-40 is located inside the microtubule lumen. This modification has been correlated with increased microtubule stability, intracellular transport and ciliary assembly. Post-translationally, undergoes a tyrosination/detyrosination cycle, the cyclic removal and re-addition of a C-terminal tyrosine residue by the enzymes tubulin tyrosine carboxypeptidase (MATCAP, VASH1 or VASH2) and tubulin tyrosine ligase (TTL), respectively. Tyrosination promotes microtubule interaction with CAP-Gly microtubule plus-end tracking proteins. Tyrosinated tubulins regulate the initiation of dynein-driven motility. In terms of processing, detyrosination is involved in metaphase plate congression by guiding chromosomes during mitosis. Detyrosination increases microtubules-dependent mechanotransduction in dystrophic cardiac and skeletal muscle. In cardiomyocytes, detyrosinated microtubules are required to resist to contractile compression during contraction.

The protein resides in the cytoplasm. It localises to the cytoskeleton. It carries out the reaction GTP + H2O = GDP + phosphate + H(+). Its function is as follows. Tubulin is the major constituent of microtubules, a cylinder consisting of laterally associated linear protofilaments composed of alpha- and beta-tubulin heterodimers. Microtubules grow by the addition of GTP-tubulin dimers to the microtubule end, where a stabilizing cap forms. Below the cap, tubulin dimers are in GDP-bound state, owing to GTPase activity of alpha-tubulin. This is Tubulin alpha chain from Notophthalmus viridescens (Eastern newt).